A 67-amino-acid polypeptide reads, in one-letter code: Large ribosomal subunit protein uL29 (67 aa).

It belongs to the universal ribosomal protein uL29 family. In terms of assembly, part of the 50S ribosomal subunit. Contacts protein L23 and trigger factor when it is complexed with the ribosome.

Functionally, binds the 23S rRNA. One of the proteins that surrounds the polypeptide exit tunnel on the outside of the subunit. In Deinococcus radiodurans (strain ATCC 13939 / DSM 20539 / JCM 16871 / CCUG 27074 / LMG 4051 / NBRC 15346 / NCIMB 9279 / VKM B-1422 / R1), this protein is Large ribosomal subunit protein uL29 (rpmC).